The primary structure comprises 462 residues: ATP synthase subunit beta (462 aa).

149 to 156 lines the ATP pocket; the sequence is GGAGVGKT.

It belongs to the ATPase alpha/beta chains family. In terms of assembly, F-type ATPases have 2 components, CF(1) - the catalytic core - and CF(0) - the membrane proton channel. CF(1) has five subunits: alpha(3), beta(3), gamma(1), delta(1), epsilon(1). CF(0) has three main subunits: a(1), b(2) and c(9-12). The alpha and beta chains form an alternating ring which encloses part of the gamma chain. CF(1) is attached to CF(0) by a central stalk formed by the gamma and epsilon chains, while a peripheral stalk is formed by the delta and b chains.

It localises to the cell inner membrane. It carries out the reaction ATP + H2O + 4 H(+)(in) = ADP + phosphate + 5 H(+)(out). In terms of biological role, produces ATP from ADP in the presence of a proton gradient across the membrane. The catalytic sites are hosted primarily by the beta subunits. The protein is ATP synthase subunit beta of Fusobacterium nucleatum subsp. nucleatum (strain ATCC 25586 / DSM 15643 / BCRC 10681 / CIP 101130 / JCM 8532 / KCTC 2640 / LMG 13131 / VPI 4355).